The sequence spans 70 residues: Turripeptide Gsp9.3 (70 aa).

The first 20 residues, 1 to 20 (MKVYCLLLVLLVGLVSQAHG), serve as a signal peptide directing secretion. A Kazal-like domain is found at 21–70 (QLDKKCQMVCTFDYRPVCGSDGRTYPNKCTLTSTACMSQRSITVFHDGEC). Cystine bridges form between cysteine 26–cysteine 56, cysteine 30–cysteine 49, and cysteine 38–cysteine 70.

The protein belongs to the conopeptide P-like superfamily. Expressed by the venom duct.

It is found in the secreted. Functionally, acts as a neurotoxin by inhibiting an ion channel. May also act as a serine protease inhibitor, since it possess the kazal serine protease inhibitor signature. This Gemmula speciosa (Splendid gem-turris) protein is Turripeptide Gsp9.3.